A 371-amino-acid chain; its full sequence is Photosynthetic reaction center cytochrome c subunit (371 aa).

Heme contacts are provided by Met114, Cys127, Cys130, His131, Met153, His167, Cys178, Cys181, His182, Met267, Cys278, Cys281, His282, Cys339, Cys342, and His343.

In terms of assembly, component of the photosynthetic reaction center composed of protein subunits L (PufL), M (PufM), H (PuhA) and cytochrome C (PufC). The reaction center interacts with light-harvesting antenna complex LH1. Post-translationally, binds 4 heme groups per subunit.

Its subcellular location is the cellular chromatophore membrane. Functionally, the reaction center of purple bacteria contains a tightly bound cytochrome molecule which re-reduces the photo oxidized primary electron donor. In Roseobacter denitrificans (strain ATCC 33942 / OCh 114) (Erythrobacter sp. (strain OCh 114)), this protein is Photosynthetic reaction center cytochrome c subunit (pufC).